The primary structure comprises 1555 residues: Regulating synaptic membrane exocytosis protein 2 (1555 aa).

The segment at 1-35 is disordered; it reads MSAPLGPRGRPAPTPAASQPPPQPEMPDLSHLTEE. The span at 10 to 25 shows a compositional bias: pro residues; sequence RPAPTPAASQPPPQPE. The RabBD domain maps to 26–154; sequence MPDLSHLTEE…TKSGAWFYNS (129 aa). The FYVE-type zinc finger occupies 86–142; sequence KGDAPTCGICHKTKFADGCGHNCSYCQTKFCARCGGRVSLRSNKVMWVCNLCRKQQE. Positions 92, 95, 108, 111, 116, 119, 134, and 137 each coordinate Zn(2+). A compositionally biased stretch (polar residues) spans 154–163; sequence SGSNTPQQPD. A disordered region spans residues 154 to 530; sequence SGSNTPQQPD…STPEYTSCDD (377 aa). Over residues 170–185 the composition is skewed to basic and acidic residues; sequence LRSEEAPQEKKAKLHE. Over residues 259–268 the composition is skewed to polar residues; it reads YVPSDSTMPR. Composition is skewed to basic and acidic residues over residues 287-298, 317-335, 351-370, and 379-403; these read EPDHLNYRDSNR, RDEY…RYRS, EQMR…RHSD, and EDSR…RRAA. Ser-369 carries the phosphoserine modification. The span at 418–432 shows a compositional bias: polar residues; the sequence is AQGQSSYPQRTTNHS. Basic and acidic residues predominate over residues 444 to 461; that stretch reads DRPELRRADSLRKQHHLD. Polar residues predominate over residues 479–490; the sequence is RNDSLSSDQSES. The segment covering 497-506 has biased composition (basic residues); sequence RPHKSKKGGK. Residues 590 to 676 enclose the PDZ domain; that stretch reads DGSVPRDSGA…EPQVELVVSR (87 aa). Residue Thr-611 is modified to Phosphothreonine. The interval 682–716 is disordered; that stretch reads PRIPDSTHAQLESSSSSFESQKMDRPSISVTSPMS. Ser-713 and Ser-716 each carry phosphoserine. The C2 1 domain occupies 743–866; sequence FVPRVQIKLW…ALLDDEPHWY (124 aa). Disordered regions lie at residues 877–913, 935–1145, 1180–1207, 1268–1288, and 1307–1332; these read PLPH…VSDY, STLS…KRNS, YRSG…DVSA, LEKN…TSGK, and KSRS…QRST. The segment covering 935 to 953 has biased composition (polar residues); that stretch reads STLSVPEQVMSSNHCSPSG. Composition is skewed to basic and acidic residues over residues 996-1014 and 1025-1071; these read RMDR…RDSH and QTSE…ERAD. Residues 1092-1114 show a composition bias toward low complexity; that stretch reads ALSRSHPRTGSVQTSPSSTPVTG. Residue Ser-1106 is modified to Phosphoserine. Basic and acidic residues-rich tracts occupy residues 1128–1141 and 1180–1190; these read TLER…DSTR and YRSGWDPHRGA. Residues Ser-1200 and Ser-1276 each carry the phosphoserine modification. Residues 1401–1519 enclose the C2 2 domain; it reads AMGDIQVGMM…ELSNMVIGWF (119 aa). Phosphoserine is present on residues Ser-1540 and Ser-1543.

Heterodimer with PCLO. Part of a ternary complex involving PCLO and EPAC2. Interacts with RAB3C, RAB3D and RAB26. Binds RAB3A and RAB3B that have been activated by GTP-binding. Interacts with TSPOAP1 and RIMBP2. Interacts with PPFIA3 and PPFIA4. Interacts via its zinc finger with the first C2 domain of UNC13A. Forms a complex consisting of UNC13A, RIMS2 and RAB3A. As to expression, highly expressed in hippocampus, brain cortex, cerebellum and olfactory bulb. Detected at intermediate levels in midbrain, hindbrain and spinal cord, and at low levels in testis.

The protein resides in the cell membrane. Its subcellular location is the synapse. The protein localises to the presynaptic cell membrane. Rab effector involved in exocytosis. May act as scaffold protein. Plays a role in dendrite formation by melanocytes. The sequence is that of Regulating synaptic membrane exocytosis protein 2 (Rims2) from Rattus norvegicus (Rat).